The sequence spans 274 residues: 3-methyl-2-oxobutanoate hydroxymethyltransferase (274 aa).

The Mg(2+) site is built by Asp-54 and Asp-93. Residues Asp-54 to Ser-55, Asp-93, and Lys-121 contribute to the 3-methyl-2-oxobutanoate site. Residue Glu-123 participates in Mg(2+) binding. Glu-190 functions as the Proton acceptor in the catalytic mechanism.

The protein belongs to the PanB family. In terms of assembly, homodecamer; pentamer of dimers. The cofactor is Mg(2+).

The protein localises to the cytoplasm. It carries out the reaction 3-methyl-2-oxobutanoate + (6R)-5,10-methylene-5,6,7,8-tetrahydrofolate + H2O = 2-dehydropantoate + (6S)-5,6,7,8-tetrahydrofolate. It participates in cofactor biosynthesis; (R)-pantothenate biosynthesis; (R)-pantoate from 3-methyl-2-oxobutanoate: step 1/2. Catalyzes the reversible reaction in which hydroxymethyl group from 5,10-methylenetetrahydrofolate is transferred onto alpha-ketoisovalerate to form ketopantoate. This is 3-methyl-2-oxobutanoate hydroxymethyltransferase from Ralstonia nicotianae (strain ATCC BAA-1114 / GMI1000) (Ralstonia solanacearum).